The chain runs to 333 residues: Replication factor C subunit 2 (333 aa).

The residue at position 2 (Ala-2) is an N-acetylalanine. 55–62 is an ATP binding site; that stretch reads GPPGTGKT.

Belongs to the activator 1 small subunits family. As to quaternary structure, heterotetramer of subunits RFC2, RFC3, RFC4 and RFC5 that can form a complex with RFC1.

The protein resides in the nucleus. Functionally, may be involved in DNA replication and thus regulate cell proliferation. In Arabidopsis thaliana (Mouse-ear cress), this protein is Replication factor C subunit 2 (RFC2).